Here is a 225-residue protein sequence, read N- to C-terminus: Shikimate kinase (225 aa).

27–32 is a binding site for ATP; sequence GAGKTT. Threonine 31 serves as a coordination point for Mg(2+). Residues aspartate 49, arginine 73, and glycine 95 each contribute to the substrate site. Arginine 132 contacts ATP. Arginine 150 serves as a coordination point for substrate. The disordered stretch occupies residues 186–225; that stretch reads GGSEPDEAADAAGGSEPDEAADAAGGSEPDEAADAAGGKR.

This sequence belongs to the shikimate kinase family. Monomer. The cofactor is Mg(2+).

The protein resides in the cytoplasm. It catalyses the reaction shikimate + ATP = 3-phosphoshikimate + ADP + H(+). It participates in metabolic intermediate biosynthesis; chorismate biosynthesis; chorismate from D-erythrose 4-phosphate and phosphoenolpyruvate: step 5/7. Its function is as follows. Catalyzes the specific phosphorylation of the 3-hydroxyl group of shikimic acid using ATP as a cosubstrate. The protein is Shikimate kinase of Frankia casuarinae (strain DSM 45818 / CECT 9043 / HFP020203 / CcI3).